Consider the following 511-residue polypeptide: Cobyric acid synthase (511 aa).

One can recognise a GATase cobBQ-type domain in the interval 251–443 (LLDIAIICLP…IHGIFDNDVF (193 aa)). Catalysis depends on cysteine 332, which acts as the Nucleophile. Residue histidine 435 is part of the active site.

The protein belongs to the CobB/CobQ family. CobQ subfamily.

The protein operates within cofactor biosynthesis; adenosylcobalamin biosynthesis. In terms of biological role, catalyzes amidations at positions B, D, E, and G on adenosylcobyrinic A,C-diamide. NH(2) groups are provided by glutamine, and one molecule of ATP is hydrogenolyzed for each amidation. The polypeptide is Cobyric acid synthase (Listeria monocytogenes serovar 1/2a (strain ATCC BAA-679 / EGD-e)).